A 228-amino-acid polypeptide reads, in one-letter code: ATP synthase subunit a (228 aa).

6 helical membrane-spanning segments follow: residues 19-39 (AIYI…AVAV), 81-101 (LIAT…IPGF), 107-127 (SLNL…FEGI), 136-156 (FAGF…IEVI), 178-198 (LFLL…PYAL), and 204-224 (ILQA…AVVV).

Belongs to the ATPase A chain family. As to quaternary structure, F-type ATPases have 2 components, CF(1) - the catalytic core - and CF(0) - the membrane proton channel. CF(1) has five subunits: alpha(3), beta(3), gamma(1), delta(1), epsilon(1). CF(0) has three main subunits: a(1), b(2) and c(9-12). The alpha and beta chains form an alternating ring which encloses part of the gamma chain. CF(1) is attached to CF(0) by a central stalk formed by the gamma and epsilon chains, while a peripheral stalk is formed by the delta and b chains.

Its subcellular location is the cell inner membrane. Functionally, key component of the proton channel; it plays a direct role in the translocation of protons across the membrane. The polypeptide is ATP synthase subunit a (Campylobacter hominis (strain ATCC BAA-381 / DSM 21671 / CCUG 45161 / LMG 19568 / NCTC 13146 / CH001A)).